The sequence spans 275 residues: MSTGISTDLHVHFGALNFSKTYKSGLSNRTVSFSRVGYAQNRKLSCSVSNTENVAPKDDERGKDRPLVKMCGITSARDAAMAVEAGADFIGMIIWPHSKRSISLSVAKDISKVAREGGAKPVGVFVEDDDNTILRAADSSDLELVQLHGNGSRAAFSRLVRKRRVIYVLNANQDGKLLNEVPEEDCHLADWILVDSATGGSGHGFNWAQFKLPSVRSRNGWLLAGGINPTNVSEALSILQPDGIDVSSGICGTDGIQKDKSKISSFITAVRSVHY.

The N-terminal 32 residues, 1-32 (MSTGISTDLHVHFGALNFSKTYKSGLSNRTVS), are a transit peptide targeting the chloroplast.

The protein belongs to the TrpF family. Expressed in roots and shoots.

Its subcellular location is the plastid. The protein resides in the chloroplast. It catalyses the reaction N-(5-phospho-beta-D-ribosyl)anthranilate = 1-(2-carboxyphenylamino)-1-deoxy-D-ribulose 5-phosphate. The protein operates within amino-acid biosynthesis; L-tryptophan biosynthesis; L-tryptophan from chorismate: step 3/5. In Arabidopsis thaliana (Mouse-ear cress), this protein is N-(5'-phosphoribosyl)anthranilate isomerase 2, chloroplastic (PAI2).